We begin with the raw amino-acid sequence, 312 residues long: tRNA pseudouridine synthase B (312 aa).

Aspartate 46 serves as the catalytic Nucleophile. Positions 74, 177, and 198 each coordinate substrate.

It belongs to the pseudouridine synthase TruB family. Type 1 subfamily.

The catalysed reaction is uridine(55) in tRNA = pseudouridine(55) in tRNA. Its function is as follows. Responsible for synthesis of pseudouridine from uracil-55 in the psi GC loop of transfer RNAs. The protein is tRNA pseudouridine synthase B of Buchnera aphidicola subsp. Schizaphis graminum (strain Sg).